The chain runs to 495 residues: Lanosterol 14-alpha demethylase erg11 (495 aa).

A helical transmembrane segment spans residues 2-22 (AFSLVSILLSIALAWYVGYII). Residue Cys442 participates in heme binding.

It belongs to the cytochrome P450 family. As to quaternary structure, interacts with dap1. Heme is required as a cofactor.

The protein resides in the endoplasmic reticulum. The protein localises to the membrane. The enzyme catalyses a 14alpha-methyl steroid + 3 reduced [NADPH--hemoprotein reductase] + 3 O2 = a Delta(14) steroid + formate + 3 oxidized [NADPH--hemoprotein reductase] + 4 H2O + 4 H(+). The catalysed reaction is a 14alpha-methyl steroid + reduced [NADPH--hemoprotein reductase] + O2 = a 14alpha-hydroxymethyl steroid + oxidized [NADPH--hemoprotein reductase] + H2O + H(+). It carries out the reaction a 14alpha-hydroxymethyl steroid + reduced [NADPH--hemoprotein reductase] + O2 = a 14alpha-formyl steroid + oxidized [NADPH--hemoprotein reductase] + 2 H2O + H(+). It catalyses the reaction a 14alpha-formyl steroid + reduced [NADPH--hemoprotein reductase] + O2 = a Delta(14) steroid + formate + oxidized [NADPH--hemoprotein reductase] + H2O + 2 H(+). The enzyme catalyses lanosterol + 3 reduced [NADPH--hemoprotein reductase] + 3 O2 = 4,4-dimethyl-5alpha-cholesta-8,14,24-trien-3beta-ol + formate + 3 oxidized [NADPH--hemoprotein reductase] + 4 H2O + 4 H(+). The catalysed reaction is lanosterol + reduced [NADPH--hemoprotein reductase] + O2 = 32-hydroxylanosterol + oxidized [NADPH--hemoprotein reductase] + H2O + H(+). It carries out the reaction 32-hydroxylanosterol + reduced [NADPH--hemoprotein reductase] + O2 = 32-oxolanosterol + oxidized [NADPH--hemoprotein reductase] + 2 H2O + H(+). It catalyses the reaction 32-oxolanosterol + reduced [NADPH--hemoprotein reductase] + O2 = 4,4-dimethyl-5alpha-cholesta-8,14,24-trien-3beta-ol + formate + oxidized [NADPH--hemoprotein reductase] + H2O + 2 H(+). The enzyme catalyses eburicol + 3 reduced [NADPH--hemoprotein reductase] + 3 O2 = 14-demethyleburicol + formate + 3 oxidized [NADPH--hemoprotein reductase] + 4 H2O + 4 H(+). The catalysed reaction is eburicol + reduced [NADPH--hemoprotein reductase] + O2 = 32-hydroxyeburicol + oxidized [NADPH--hemoprotein reductase] + H2O + H(+). It carries out the reaction 32-hydroxyeburicol + reduced [NADPH--hemoprotein reductase] + O2 = 32-oxoeburicol + oxidized [NADPH--hemoprotein reductase] + 2 H2O + H(+). It catalyses the reaction 32-oxoeburicol + reduced [NADPH--hemoprotein reductase] + O2 = 14-demethyleburicol + formate + oxidized [NADPH--hemoprotein reductase] + H2O + 2 H(+). Its pathway is steroid biosynthesis; zymosterol biosynthesis; zymosterol from lanosterol: step 1/6. The protein operates within steroid metabolism; ergosterol biosynthesis. Functionally, sterol 14alpha-demethylase that plays a critical role in the third module of ergosterol biosynthesis pathway, being ergosterol the major sterol component in fungal membranes that participates in a variety of functions. The third module or late pathway involves the ergosterol synthesis itself through consecutive reactions that mainly occur in the endoplasmic reticulum (ER) membrane. In filamentous fungi, during the initial step of this module, lanosterol (lanosta-8,24-dien-3beta-ol) can be metabolized to eburicol. Sterol 14alpha-demethylase catalyzes the three-step oxidative removal of the 14alpha-methyl group (C-32) of both these sterols in the form of formate, and converts eburicol and lanosterol to 14-demethyleburicol (4,4,24-trimethylergosta-8,14,24(28)-trienol) and 4,4-dimethyl-5alpha-cholesta-8,14,24-trien-3beta-ol, respectively, which are further metabolized by other enzymes in the pathway to ergosterol. Can also use substrates not intrinsic to fungi, such as 24,25-dihydrolanosterol (DHL), producing 4,4-dimethyl-8,14-cholestadien-3-beta-ol, but at lower rates than the endogenous substrates. In Schizosaccharomyces pombe (strain 972 / ATCC 24843) (Fission yeast), this protein is Lanosterol 14-alpha demethylase erg11.